The sequence spans 445 residues: MQVTETLSAGLKRGFTVTVPAGELESKRTARLKELGQSMNLPGFRPGKVPLSIVKQRYGDAVQGEVLEQAVSDATRALMDERGLRPAMQPRVDLVAGAEPGGKADLEFKVEVELLPDIAQPDLSTLSLTRLKATPDAETIDKALKDIASRQRDFETIEDVRPAAQGDVVVVDFVGKVDGVAFEGGTAQDVNVELGGAGFIPGFAEQIEGMSPGEEKVITVTFPADYSAENLAGKEATFDITAKALKRPVDVEIDDEMAKKIGFEGLEQVRELITRQVEQEYEQLSRLRIKRELLDALAEKTDFEAPQGMVEAEFAQIWQRVEADRKAGELDEEDKEKDEDTLRADYRKIAERRVKLGLLLAEIGRANAITVSQDEMLQAIRAEAMRYPGQEQQVFEFFRKNPQAAESLRGPIFENKVVDYVIELATVEDKDVTPEELAEIPPADL.

In terms of domain architecture, PPIase FKBP-type spans 166 to 251 (GDVVVVDFVG…AKALKRPVDV (86 aa)).

This sequence belongs to the FKBP-type PPIase family. Tig subfamily.

It is found in the cytoplasm. It carries out the reaction [protein]-peptidylproline (omega=180) = [protein]-peptidylproline (omega=0). Involved in protein export. Acts as a chaperone by maintaining the newly synthesized protein in an open conformation. Functions as a peptidyl-prolyl cis-trans isomerase. This chain is Trigger factor, found in Gluconacetobacter diazotrophicus (strain ATCC 49037 / DSM 5601 / CCUG 37298 / CIP 103539 / LMG 7603 / PAl5).